The primary structure comprises 89 residues: Putative regulatory protein RBAM_015500 (89 aa).

The protein belongs to the RemA family.

The chain is Putative regulatory protein RBAM_015500 from Bacillus velezensis (strain DSM 23117 / BGSC 10A6 / LMG 26770 / FZB42) (Bacillus amyloliquefaciens subsp. plantarum).